The sequence spans 115 residues: Peptidyl-tRNA hydrolase (115 aa).

It belongs to the PTH2 family.

It is found in the cytoplasm. The catalysed reaction is an N-acyl-L-alpha-aminoacyl-tRNA + H2O = an N-acyl-L-amino acid + a tRNA + H(+). The natural substrate for this enzyme may be peptidyl-tRNAs which drop off the ribosome during protein synthesis. The protein is Peptidyl-tRNA hydrolase of Methanocaldococcus jannaschii (strain ATCC 43067 / DSM 2661 / JAL-1 / JCM 10045 / NBRC 100440) (Methanococcus jannaschii).